The sequence spans 1015 residues: Translation initiation factor IF-2 (1015 aa).

Disordered regions lie at residues 124-144 (EKEP…EKKV), 159-179 (EVTV…PKPV), 196-230 (KKEE…KEEE), and 250-386 (IDLA…VSEE). 2 stretches are compositionally biased toward basic and acidic residues: residues 196 to 217 (KKEE…EKPV) and 265 to 315 (SKEE…DPNG). Residues 514–684 (HRAPIVTVMG…LLEAEMLDLK (171 aa)) enclose the tr-type G domain. Positions 523–530 (GHVDHGKT) are G1. Residue 523-530 (GHVDHGKT) participates in GTP binding. A G2 region spans residues 548-552 (GITQH). A G3 region spans residues 570-573 (DTPG). Residues 570-574 (DTPGH) and 624-627 (NKID) contribute to the GTP site. A G4 region spans residues 624–627 (NKID). A G5 region spans residues 660–662 (SAK).

This sequence belongs to the TRAFAC class translation factor GTPase superfamily. Classic translation factor GTPase family. IF-2 subfamily.

The protein localises to the cytoplasm. One of the essential components for the initiation of protein synthesis. Protects formylmethionyl-tRNA from spontaneous hydrolysis and promotes its binding to the 30S ribosomal subunits. Also involved in the hydrolysis of GTP during the formation of the 70S ribosomal complex. This Bacteroides fragilis (strain ATCC 25285 / DSM 2151 / CCUG 4856 / JCM 11019 / LMG 10263 / NCTC 9343 / Onslow / VPI 2553 / EN-2) protein is Translation initiation factor IF-2.